The chain runs to 353 residues: Photosystem II D2 protein (353 aa).

Thr-2 carries the N-acetylthreonine modification. At Thr-2 the chain carries Phosphothreonine. A helical transmembrane segment spans residues 41 to 61 (CAYFALGGWFTGTTFVTSWYT). Residue His-118 coordinates chlorophyll a. The chain crosses the membrane as a helical span at residues 125-141 (GFMLRQFELARSVQLRP). Residues Gln-130 and Asn-143 each coordinate pheophytin a. Residues 153–166 (VFVSVFLIYPLGQS) traverse the membrane as a helical segment. His-198 is a binding site for chlorophyll a. A helical transmembrane segment spans residues 208–228 (AALLCAIHGATVENTLFEDGD). A plastoquinone is bound by residues His-215 and Phe-262. His-215 provides a ligand contact to Fe cation. His-269 is a binding site for Fe cation. A helical transmembrane segment spans residues 279–295 (GLWMSAIGVVGLALNLR).

Belongs to the reaction center PufL/M/PsbA/D family. As to quaternary structure, PSII is composed of 1 copy each of membrane proteins PsbA, PsbB, PsbC, PsbD, PsbE, PsbF, PsbH, PsbI, PsbJ, PsbK, PsbL, PsbM, PsbT, PsbX, PsbY, PsbZ, Psb30/Ycf12, at least 3 peripheral proteins of the oxygen-evolving complex and a large number of cofactors. It forms dimeric complexes. It depends on The D1/D2 heterodimer binds P680, chlorophylls that are the primary electron donor of PSII, and subsequent electron acceptors. It shares a non-heme iron and each subunit binds pheophytin, quinone, additional chlorophylls, carotenoids and lipids. There is also a Cl(-1) ion associated with D1 and D2, which is required for oxygen evolution. The PSII complex binds additional chlorophylls, carotenoids and specific lipids. as a cofactor. Phosphorylated on threonine residue(s); phosphorylation increases with increasing light levels.

It localises to the plastid. The protein localises to the chloroplast thylakoid membrane. The enzyme catalyses 2 a plastoquinone + 4 hnu + 2 H2O = 2 a plastoquinol + O2. Its function is as follows. Photosystem II (PSII) is a light-driven water:plastoquinone oxidoreductase that uses light energy to abstract electrons from H(2)O, generating O(2) and a proton gradient subsequently used for ATP formation. It consists of a core antenna complex that captures photons, and an electron transfer chain that converts photonic excitation into a charge separation. The D1/D2 (PsbA/PsbD) reaction center heterodimer binds P680, the primary electron donor of PSII as well as several subsequent electron acceptors. D2 is needed for assembly of a stable PSII complex. The polypeptide is Photosystem II D2 protein (Marchantia polymorpha (Common liverwort)).